The chain runs to 369 residues: uncharacterized protein (369 aa).

This is an uncharacterized protein from Caenorhabditis elegans.